We begin with the raw amino-acid sequence, 1519 residues long: Putative lipoprotein YghJ (1519 aa).

Residues 1–23 (MNKKFKYKKSLLAAILSATLLAG) form the signal peptide. Disordered stretches follow at residues 22–107 (AGCD…GATC) and 226–247 (NAAT…TTPG). C24 is lipidated: N-palmitoyl cysteine. Residue C24 is the site of S-diacylglycerol cysteine attachment. Residues 31 to 42 (SSSDTPPVDSGT) show a composition bias toward low complexity. The segment covering 51–77 (DPTPNPEPTPEPTPDPEPTPEPIPDPE) has biased composition (pro residues). Over residues 97–107 (GGSQRVTGATC) the composition is skewed to polar residues. The segment covering 234–247 (STHTSPVVPVTTPG) has biased composition (low complexity). The 301-residue stretch at 1080-1380 (GNMQSTGLWA…MYAQLKEWAE (301 aa)) folds into the Peptidase M60 domain. The interval 1497–1519 (DLPKPEQGPETINQVTEHKMSAE) is disordered.

This sequence to V.cholerae AcfD (VC_0845).

It is found in the cell membrane. In terms of biological role, may be a substrate of the type II secretion system beta (T2SS-beta). The chain is Putative lipoprotein YghJ (yghJ) from Escherichia coli O78:H11 (strain H10407 / ETEC).